Here is a 179-residue protein sequence, read N- to C-terminus: Large ribosomal subunit protein uL5 (179 aa).

The protein belongs to the universal ribosomal protein uL5 family. In terms of assembly, part of the 50S ribosomal subunit; part of the 5S rRNA/L5/L18/L25 subcomplex. Contacts the 5S rRNA and the P site tRNA. Forms a bridge to the 30S subunit in the 70S ribosome.

In terms of biological role, this is one of the proteins that bind and probably mediate the attachment of the 5S RNA into the large ribosomal subunit, where it forms part of the central protuberance. In the 70S ribosome it contacts protein S13 of the 30S subunit (bridge B1b), connecting the 2 subunits; this bridge is implicated in subunit movement. Contacts the P site tRNA; the 5S rRNA and some of its associated proteins might help stabilize positioning of ribosome-bound tRNAs. This Alkaliphilus oremlandii (strain OhILAs) (Clostridium oremlandii (strain OhILAs)) protein is Large ribosomal subunit protein uL5.